A 254-amino-acid polypeptide reads, in one-letter code: Phosphoribosylaminoimidazole-succinocarboxamide synthase (254 aa).

It belongs to the SAICAR synthetase family.

The catalysed reaction is 5-amino-1-(5-phospho-D-ribosyl)imidazole-4-carboxylate + L-aspartate + ATP = (2S)-2-[5-amino-1-(5-phospho-beta-D-ribosyl)imidazole-4-carboxamido]succinate + ADP + phosphate + 2 H(+). Its pathway is purine metabolism; IMP biosynthesis via de novo pathway; 5-amino-1-(5-phospho-D-ribosyl)imidazole-4-carboxamide from 5-amino-1-(5-phospho-D-ribosyl)imidazole-4-carboxylate: step 1/2. The sequence is that of Phosphoribosylaminoimidazole-succinocarboxamide synthase from Brucella canis (strain ATCC 23365 / NCTC 10854 / RM-666).